We begin with the raw amino-acid sequence, 498 residues long: ATP synthase subunit beta, chloroplastic (498 aa).

G172 to T179 contributes to the ATP binding site.

The protein belongs to the ATPase alpha/beta chains family. F-type ATPases have 2 components, CF(1) - the catalytic core - and CF(0) - the membrane proton channel. CF(1) has five subunits: alpha(3), beta(3), gamma(1), delta(1), epsilon(1). CF(0) has four main subunits: a(1), b(1), b'(1) and c(9-12).

Its subcellular location is the plastid. The protein localises to the chloroplast thylakoid membrane. The enzyme catalyses ATP + H2O + 4 H(+)(in) = ADP + phosphate + 5 H(+)(out). In terms of biological role, produces ATP from ADP in the presence of a proton gradient across the membrane. The catalytic sites are hosted primarily by the beta subunits. The sequence is that of ATP synthase subunit beta, chloroplastic from Liriodendron tulipifera (Tuliptree).